The sequence spans 394 residues: Galactose-3-O-sulfotransferase 2 (394 aa).

Residues 1-8 are Cytoplasmic-facing; sequence MWGSQHRS. The helical; Signal-anchor for type II membrane protein transmembrane segment at 9–29 threads the bilayer; sequence FQVALWFLVLAVFLLVGFLHV. Topologically, residues 30 to 394 are lumenal; sequence DFRLLIPDKV…TPKDIPFLKK (365 aa). N-linked (GlcNAc...) asparagine glycosylation is found at asparagine 72, asparagine 176, asparagine 284, and asparagine 326.

Belongs to the galactose-3-O-sulfotransferase family.

Its subcellular location is the golgi apparatus. The protein localises to the golgi stack membrane. Its pathway is protein modification; carbohydrate sulfation. With respect to regulation, strongly inhibited by Cu(2+) and Zn(2+). Its function is as follows. Transfers a sulfate group to the hydroxyl group at C3 of non-reducing beta-galactosyl residues. Acts both on type 1 (Gal-beta-1,3-GlcNAc) and type 2 (Gal-beta-1,4-GlcNAc) chains with similar efficiency. This Mus musculus (Mouse) protein is Galactose-3-O-sulfotransferase 2 (Gal3st2).